We begin with the raw amino-acid sequence, 189 residues long: MTEYKLVVVGAGGVGKSALTIQLIQNHFVDEYDPTIEDSYRKQVVIDGETCLLDILDTAGQEEYSAMRDQYMRTGEGFLCVFAINNSKSFADINLYREQIKRVKDSDDVPMVLVGNKCDLPTRTVDTKQAHELAKSYGIPFIETSAKTRQGVEDAFYTLVREIRQYRMKKLNSSDDGTQGCLGLSCAVM.

Residues 10 to 18 (GAGGVGKSA) and 29 to 30 (VD) each bind GTP. An Effector region motif is present at residues 32–40 (YDPTIEDSY). 57–61 (DTAGQ) serves as a coordination point for GTP. Ser89 carries the phosphoserine modification. 116–119 (NKCD) contacts GTP. Residues 166 to 185 (YRMKKLNSSDDGTQGCLGLS) are hypervariable region. Lys170 is covalently cross-linked (Glycyl lysine isopeptide (Lys-Gly) (interchain with G-Cter in ubiquitin)). Cys181 carries S-palmitoyl cysteine lipidation. Cys186 carries S-farnesyl cysteine lipidation. Residues 187–189 (AVM) constitute a propeptide, removed in mature form.

Belongs to the small GTPase superfamily. Ras family. Interacts (active GTP-bound form preferentially) with RGS14. Interacts (active GTP-bound form) with RASSF7. Interacts (active GTP-bound form) with both SHOC2 and PP1c (all isoforms) to form a tertiary complex; SHOC2 and PP1c preferably bind M-Ras/MRAS, but they also bind K-Ras/KRAS, N-Ras/NRAS and H-Ras/HRAS. Post-translationally, palmitoylated by the ZDHHC9-GOLGA7 complex. Depalmitoylated by ABHD17A, ABHD17B and ABHD17C. A continuous cycle of de- and re-palmitoylation regulates rapid exchange between plasma membrane and Golgi. Acetylation at Lys-104 prevents interaction with guanine nucleotide exchange factors (GEFs). In terms of processing, ubiquitinated by the BCR(LZTR1) E3 ubiquitin ligase complex at Lys-170 in a non-degradative manner, leading to inhibit Ras signaling by decreasing Ras association with membranes. Post-translationally, phosphorylation at Ser-89 enhances NRAS association with its downstream effectors.

The protein localises to the cell membrane. It localises to the golgi apparatus membrane. It carries out the reaction GTP + H2O = GDP + phosphate + H(+). Its activity is regulated as follows. Alternates between an inactive form bound to GDP and an active form bound to GTP. Activated by a guanine nucleotide-exchange factor (GEF) and inactivated by a GTPase-activating protein (GAP). Functionally, ras proteins bind GDP/GTP and possess intrinsic GTPase activity. This Monodelphis domestica (Gray short-tailed opossum) protein is GTPase NRas (NRAS).